The sequence spans 561 residues: Glutamate--tRNA ligase (561 aa).

The 'HIGH' region motif lies at 107-117 (PNPSGPLHLGH).

It belongs to the class-I aminoacyl-tRNA synthetase family. Glutamate--tRNA ligase type 2 subfamily.

It is found in the cytoplasm. The enzyme catalyses tRNA(Glu) + L-glutamate + ATP = L-glutamyl-tRNA(Glu) + AMP + diphosphate. In terms of biological role, catalyzes the attachment of glutamate to tRNA(Glu) in a two-step reaction: glutamate is first activated by ATP to form Glu-AMP and then transferred to the acceptor end of tRNA(Glu). The protein is Glutamate--tRNA ligase of Methanoculleus marisnigri (strain ATCC 35101 / DSM 1498 / JR1).